A 65-amino-acid chain; its full sequence is Large ribosomal subunit protein bL35 (65 aa).

The protein belongs to the bacterial ribosomal protein bL35 family.

In Nitrosomonas europaea (strain ATCC 19718 / CIP 103999 / KCTC 2705 / NBRC 14298), this protein is Large ribosomal subunit protein bL35.